The following is a 656-amino-acid chain: Tetratricopeptide repeat protein 30 homolog (656 aa).

TPR repeat units lie at residues 9 to 42 (EGEF…NPKN), 43 to 76 (LAAL…FPQY), 141 to 174 (AAVI…SGYQ), 176 to 208 (GLAY…GVKD), 238 to 271 (IEAF…NEHD), 378 to 412 (RKTA…DDSL), 416 to 449 (LPVL…CKEH), 451 to 484 (TWKL…KYDD), and 537 to 570 (SIIS…PEKK).

The protein belongs to the TTC30/dfy-1/fleer family. Component of the IFT complex B composed of at least che-2, che-13, dyf-1, dyf-3, dyf-6, dyf-11, dyf-13, ift-20, ift-74, ift-81, ifta-2, osm-1, osm-5 and osm-6. Expressed in most amphid, both phasmid and several labial-quadrant neurons.

The protein localises to the cell projection. It localises to the cilium. Functionally, plays a role in anterograde intraflagellar transport (IFT), the process by which cilia precursors are transported from the base of the cilium to the site of their incorporation at the tip. Specifically required for the kinesin osm-3 to dock onto and move the IFT particles which contain these precursors. Component of the intraflagellar transport (IFT) complex B required for transport of proteins in the motile cilium. May be required for ciliary entrance and transport of specific ciliary cargo proteins such as che-3 which are related to motility. Required for polyglutamylation of axonemal tubulin in sensory cilia. The protein is Tetratricopeptide repeat protein 30 homolog of Caenorhabditis elegans.